The primary structure comprises 631 residues: Phosphomethylpyrimidine synthase (631 aa).

Residues asparagine 239, methionine 268, tyrosine 297, histidine 333, 353–355, 394–397, and glutamate 433 each bind substrate; these read SRG and DGLR. Histidine 437 is a Zn(2+) binding site. A substrate-binding site is contributed by tyrosine 460. Zn(2+) is bound at residue histidine 501. 3 residues coordinate [4Fe-4S] cluster: cysteine 581, cysteine 584, and cysteine 589.

Belongs to the ThiC family. As to quaternary structure, homodimer. [4Fe-4S] cluster is required as a cofactor.

The enzyme catalyses 5-amino-1-(5-phospho-beta-D-ribosyl)imidazole + S-adenosyl-L-methionine = 4-amino-2-methyl-5-(phosphooxymethyl)pyrimidine + CO + 5'-deoxyadenosine + formate + L-methionine + 3 H(+). It participates in cofactor biosynthesis; thiamine diphosphate biosynthesis. In terms of biological role, catalyzes the synthesis of the hydroxymethylpyrimidine phosphate (HMP-P) moiety of thiamine from aminoimidazole ribotide (AIR) in a radical S-adenosyl-L-methionine (SAM)-dependent reaction. This is Phosphomethylpyrimidine synthase from Salmonella typhi.